The following is a 269-amino-acid chain: MTNQKISRDVHHLAHRMSGFQESSRIVPEEAPIAMSYNGTTQAVMMATPGDLEDFAIGFSLTENIVTRIEEIEALDIVAFESGIDIQMKLAKQPEQRLSARRRFMAGQVGCGLCGIDSIEQALRPLHPLEECSTTFTTRDIAAAVASLGAAQALNAKTHATHGAGFFRPGEGLFAVREDIGRHNALDKLIGAVAREGLLAEEGIVAITSRVSVEMVQKAVMLGVPVLAAISAPTALAIRTAEAANLTLVALVRDEEFDIYTHCGRIIEG.

Cysteine 111 acts as the Cysteine persulfide intermediate in catalysis.

This sequence belongs to the FdhD family.

It localises to the cytoplasm. Its function is as follows. Required for formate dehydrogenase (FDH) activity. Acts as a sulfur carrier protein that transfers sulfur from IscS to the molybdenum cofactor prior to its insertion into FDH. In Brucella melitensis biotype 1 (strain ATCC 23456 / CCUG 17765 / NCTC 10094 / 16M), this protein is Sulfur carrier protein FdhD.